The sequence spans 104 residues: Ig lambda-2 chain C region (104 aa).

The 94-residue stretch at 6–99 folds into the Ig-like domain; the sequence is PTLTVFPPSS…EGDTVEKSLS (94 aa). Residues cysteine 27 and cysteine 85 are joined by a disulfide bond.

In Mus musculus (Mouse), this protein is Ig lambda-2 chain C region (Iglc2).